The primary structure comprises 378 residues: Ribosomal RNA large subunit methyltransferase G (378 aa).

This sequence belongs to the methyltransferase superfamily. RlmG family.

The protein resides in the cytoplasm. It carries out the reaction guanosine(1835) in 23S rRNA + S-adenosyl-L-methionine = N(2)-methylguanosine(1835) in 23S rRNA + S-adenosyl-L-homocysteine + H(+). Functionally, specifically methylates the guanine in position 1835 (m2G1835) of 23S rRNA. The sequence is that of Ribosomal RNA large subunit methyltransferase G from Shigella flexneri.